The sequence spans 103 residues: Small ribosomal subunit protein uS10 (103 aa).

It belongs to the universal ribosomal protein uS10 family. In terms of assembly, part of the 30S ribosomal subunit.

Functionally, involved in the binding of tRNA to the ribosomes. In Ruminiclostridium cellulolyticum (strain ATCC 35319 / DSM 5812 / JCM 6584 / H10) (Clostridium cellulolyticum), this protein is Small ribosomal subunit protein uS10.